Consider the following 296-residue polypeptide: Urease accessory protein UreD (296 aa).

Belongs to the UreD family. In terms of assembly, ureD, UreF and UreG form a complex that acts as a GTP-hydrolysis-dependent molecular chaperone, activating the urease apoprotein by helping to assemble the nickel containing metallocenter of UreC. The UreE protein probably delivers the nickel.

The protein resides in the cytoplasm. Functionally, required for maturation of urease via the functional incorporation of the urease nickel metallocenter. This chain is Urease accessory protein UreD, found in Synechococcus sp. (strain CC9311).